A 351-amino-acid polypeptide reads, in one-letter code: Putative ABC transporter permease protein MJ0876 (351 aa).

9 consecutive transmembrane segments (helical) span residues 4-24 (VGILLILFILSLILPFTALYL), 59-79 (LPPIIGAVLIGLTISVAGLML), 99-119 (VLMVVALVIFIDSLSHLFEIF), 124-144 (ILVAGWCGGIFSMILLIIIAL), 152-172 (VIIVALLLSYFFMGLRAYLIA), 196-216 (GDVIPMTICSIIFIIGVMFLI), 249-269 (FITGAIIPYVGLIAFIGIIAP), 284-304 (LVPATMFLGVILMVSCHILSL), and 322-342 (PLPIGAVLDILGGMLVVYLVY).

This sequence belongs to the binding-protein-dependent transport system permease family. FecCD subfamily.

Its subcellular location is the cell membrane. In terms of biological role, probably part of a binding-protein-dependent transport system. Probably responsible for the translocation of the substrate across the membrane. The chain is Putative ABC transporter permease protein MJ0876 from Methanocaldococcus jannaschii (strain ATCC 43067 / DSM 2661 / JAL-1 / JCM 10045 / NBRC 100440) (Methanococcus jannaschii).